A 474-amino-acid chain; its full sequence is ATP synthase subunit beta 1 (474 aa).

157-164 provides a ligand contact to ATP; that stretch reads GGAGVGKT.

The protein belongs to the ATPase alpha/beta chains family. As to quaternary structure, F-type ATPases have 2 components, CF(1) - the catalytic core - and CF(0) - the membrane proton channel. CF(1) has five subunits: alpha(3), beta(3), gamma(1), delta(1), epsilon(1). CF(0) has three main subunits: a(1), b(2) and c(9-12). The alpha and beta chains form an alternating ring which encloses part of the gamma chain. CF(1) is attached to CF(0) by a central stalk formed by the gamma and epsilon chains, while a peripheral stalk is formed by the delta and b chains.

Its subcellular location is the cell inner membrane. It catalyses the reaction ATP + H2O + 4 H(+)(in) = ADP + phosphate + 5 H(+)(out). Produces ATP from ADP in the presence of a proton gradient across the membrane. The catalytic sites are hosted primarily by the beta subunits. This Polaromonas naphthalenivorans (strain CJ2) protein is ATP synthase subunit beta 1.